Reading from the N-terminus, the 682-residue chain is Potassium-transporting ATPase ATP-binding subunit (682 aa).

4 helical membrane-spanning segments follow: residues 34-54, 62-82, 219-239, and 254-274; these read PVMF…LAMV, ALFT…ANFA, IALT…TATL, and VLVA…LSAI. Residue D307 is the 4-aspartylphosphate intermediate of the active site. ATP contacts are provided by residues D344, E348, 377 to 384, and K395; that span reads FTAQSRMS. The Mg(2+) site is built by D518 and D522. 3 consecutive transmembrane segments (helical) span residues 588-608, 616-636, and 662-682; these read FAII…LNVM, AILS…PLAL, and LVVP…LGLA.

This sequence belongs to the cation transport ATPase (P-type) (TC 3.A.3) family. Type IA subfamily. The system is composed of three essential subunits: KdpA, KdpB and KdpC.

The protein resides in the cell inner membrane. It carries out the reaction K(+)(out) + ATP + H2O = K(+)(in) + ADP + phosphate + H(+). In terms of biological role, part of the high-affinity ATP-driven potassium transport (or Kdp) system, which catalyzes the hydrolysis of ATP coupled with the electrogenic transport of potassium into the cytoplasm. This subunit is responsible for energy coupling to the transport system and for the release of the potassium ions to the cytoplasm. In Salmonella schwarzengrund (strain CVM19633), this protein is Potassium-transporting ATPase ATP-binding subunit.